Consider the following 96-residue polypeptide: Small ribosomal subunit protein bS6 (96 aa).

This sequence belongs to the bacterial ribosomal protein bS6 family.

Functionally, binds together with bS18 to 16S ribosomal RNA. This chain is Small ribosomal subunit protein bS6, found in Streptococcus thermophilus (strain ATCC BAA-250 / LMG 18311).